Here is a 575-residue protein sequence, read N- to C-terminus: MLKLLKQISTTSTFKKPSSINNGFININLFKNYCTSVKQEDKKKVLITTPIFYVNGPPHIGHLYSALLGDALGRWNRFIGNDTLFMTGTDEHGSKVDEAAKKNGLKTIDYCDKISNRFRELFDKADIKYDDFIRTTEPRHKEAVTAIWNRLLERGYIYKGVYKGWYCTSDESFLTDDQVTEGMSPITPQNPISKKCMISLESGHEVNWIEEENYMFKLSEFSKTIENWFEEVKPIFPAIHVNLLRYMLSQGIKDLSISRPSSRIPWGIEVPNDPSQTIYVWLDALTNYLTVTGYPNVSPNSSQSHWSNATHIIGKDIIKFHSVYWPSFLIAADYPLPKSIICHAHWTVNREKMSKSRGNVVDPFLAIDNHGLELIRYFLLKGGGLENDGDWSEHELAVRFKSDLADTYGNLISRCTGKALNPSGEWPKSVTDTSLFTMDDQKLIENSSILVKSVSTHYDRGDFKSGIFEIMTFLYECNLYVQNQAPWKLVPKPNRVGSDLIRLNTIIYIAIEMIRITSLLLSPIIPTSSNLTLNYLSIPLENRSNPSNFKFGYNYHQNQNNLKLPKEILILFHKK.

Positions 52–62 match the 'HIGH' region motif; that stretch reads FYVNGPPHIGH. A 'KMSKS' region motif is present at residues 352 to 356; that stretch reads KMSKS. ATP is bound at residue Lys-355.

It belongs to the class-I aminoacyl-tRNA synthetase family.

The protein localises to the mitochondrion matrix. The catalysed reaction is tRNA(Met) + L-methionine + ATP = L-methionyl-tRNA(Met) + AMP + diphosphate. This is Probable methionine--tRNA ligase, mitochondrial (mmetS) from Dictyostelium discoideum (Social amoeba).